A 528-amino-acid chain; its full sequence is Dihydromonacolin L monooxygenase LovA (528 aa).

Residues 1–23 (MTVDALTQPHHLLSLAWNDTQQH) lie on the Cytoplasmic side of the membrane. The chain crosses the membrane as a helical; Signal-anchor for type II membrane protein span at residues 24–44 (GSWFAPLVTTSAGLLCLLLYL). Residues 45–528 (CSSGRRSDLP…DEDIRLPGSL (484 aa)) lie on the Lumenal side of the membrane. Residue C465 participates in heme binding.

The protein belongs to the cytochrome P450 family. It depends on heme as a cofactor.

The protein localises to the membrane. Its subcellular location is the endoplasmic reticulum membrane. It catalyses the reaction dihydromonacolin L carboxylate + reduced [NADPH--hemoprotein reductase] + O2 = monacolin L carboxylate + oxidized [NADPH--hemoprotein reductase] + 2 H2O + H(+). The enzyme catalyses monacolin L carboxylate + reduced [NADPH--hemoprotein reductase] + O2 = monacolin J carboxylate + oxidized [NADPH--hemoprotein reductase] + H2O + H(+). Its pathway is polyketide biosynthesis; lovastatin biosynthesis. Functionally, dihydromonacolin L monooxygenase; part of the gene cluster that mediates the biosynthesis of lovastatin (also known as mevinolin, mevacor or monacolin K), a hypolipidemic inhibitor of (3S)-hydroxymethylglutaryl-coenzyme A (HMG-CoA) reductase (HMGR). The first step in the biosynthesis of lovastatin is the production of dihydromonacolin L acid by the lovastatin nonaketide synthase lovB and the trans-acting enoyl reductase lovC via condensation of one acetyl-CoA unit and 8 malonyl-CoA units. Dihydromonacolin L acid is released from lovB by the thioesterase lovG. Next, dihydromonacolin L acid is oxidized by the dihydromonacolin L monooxygenase lovA twice to form monacolin J acid. The 2-methylbutyrate moiety of lovastatin is synthesized by the lovastatin diketide synthase lovF via condensation of one acetyl-CoA unit and one malonyl-CoA unit. Finally, the covalent attachment of this moiety to monacolin J acid is catalyzed by the transesterase lovD to yield lovastatin. LovD has broad substrate specificity and can also convert monacolin J to simvastatin using alpha-dimethylbutanoyl-S-methyl-3-mercaptopropionate (DMB-S-MMP) as the thioester acyl donor, and can also catalyze the reverse reaction and function as hydrolase in vitro. LovD has much higher activity with LovF-bound 2-methylbutanoate than with free diketide substrates. The protein is Dihydromonacolin L monooxygenase LovA of Aspergillus terreus.